A 399-amino-acid chain; its full sequence is CCA-adding enzyme (399 aa).

Gly32 and Arg35 together coordinate ATP. CTP-binding residues include Gly32 and Arg35. Mg(2+) contacts are provided by Asp45 and Asp47. 5 residues coordinate ATP: Arg116, Asp159, Arg162, Arg165, and Arg168. Positions 116, 159, 162, 165, and 168 each coordinate CTP.

Belongs to the tRNA nucleotidyltransferase/poly(A) polymerase family. Bacterial CCA-adding enzyme type 3 subfamily. In terms of assembly, homodimer. It depends on Mg(2+) as a cofactor.

It carries out the reaction a tRNA precursor + 2 CTP + ATP = a tRNA with a 3' CCA end + 3 diphosphate. It catalyses the reaction a tRNA with a 3' CCA end + 2 CTP + ATP = a tRNA with a 3' CCACCA end + 3 diphosphate. In terms of biological role, catalyzes the addition and repair of the essential 3'-terminal CCA sequence in tRNAs without using a nucleic acid template. Adds these three nucleotides in the order of C, C, and A to the tRNA nucleotide-73, using CTP and ATP as substrates and producing inorganic pyrophosphate. tRNA 3'-terminal CCA addition is required both for tRNA processing and repair. Also involved in tRNA surveillance by mediating tandem CCA addition to generate a CCACCA at the 3' terminus of unstable tRNAs. While stable tRNAs receive only 3'-terminal CCA, unstable tRNAs are marked with CCACCA and rapidly degraded. This Streptococcus sanguinis (strain SK36) protein is CCA-adding enzyme.